The sequence spans 279 residues: HTH-type transcriptional regulator HdfR (279 aa).

The region spanning 1 to 58 (MDTELLKTFLEVSRTRHFGRAAESLYLTQSAVSFRIRQLENQLGVNLFTRHRNNIRLT) is the HTH lysR-type domain. Positions 18-37 (FGRAAESLYLTQSAVSFRIR) form a DNA-binding region, H-T-H motif.

This sequence belongs to the LysR transcriptional regulatory family.

Negatively regulates the transcription of the flagellar master operon flhDC by binding to the upstream region of the operon. The polypeptide is HTH-type transcriptional regulator HdfR (Escherichia coli (strain SE11)).